The chain runs to 296 residues: Protoheme IX farnesyltransferase (296 aa).

The Cytoplasmic segment spans residues 1–9 (MMFKQYLQV). The helical transmembrane segment at 10–28 (TKPGIIFGNLISVIGGFLL) threads the bilayer. The Periplasmic portion of the chain corresponds to 29–37 (ASKGSIDYP). The chain crosses the membrane as a helical span at residues 38-56 (LFIYTLVGVSLVVASGCVF). The Cytoplasmic segment spans residues 57–78 (NNYIDRDIDRKMERTKNRVLVK). A helical membrane pass occupies residues 79–97 (GLISPAVSLVYATLLGIAG). Residues 98–107 (FMLLWFGANP) are Periplasmic-facing. Residues 108 to 126 (LACWLGVMGFVVYVGVYSL) form a helical membrane-spanning segment. The Cytoplasmic segment spans residues 127 to 197 (YMKRHSVYGT…YQAANIPVLP (71 aa)). A helical transmembrane segment spans residues 198–216 (VVKGISVAKNHITLYIIAF). Over 217–228 (AVATLMLSLGGY) the chain is Periplasmic. The chain crosses the membrane as a helical span at residues 229-247 (AGYKYLVVAAAVSVWWLGM). The Cytoplasmic portion of the chain corresponds to 248–268 (ALRGYKVADDRIWARKLFGFS). The chain crosses the membrane as a helical span at residues 269-287 (IIAITALSVMMSVDFMVPD). Residues 288–296 (SHTLLAAVW) lie on the Periplasmic side of the membrane.

The protein belongs to the UbiA prenyltransferase family. Protoheme IX farnesyltransferase subfamily.

It is found in the cell inner membrane. It catalyses the reaction heme b + (2E,6E)-farnesyl diphosphate + H2O = Fe(II)-heme o + diphosphate. The protein operates within porphyrin-containing compound metabolism; heme O biosynthesis; heme O from protoheme: step 1/1. Its function is as follows. Converts heme B (protoheme IX) to heme O by substitution of the vinyl group on carbon 2 of heme B porphyrin ring with a hydroxyethyl farnesyl side group. The polypeptide is Protoheme IX farnesyltransferase (Escherichia coli O139:H28 (strain E24377A / ETEC)).